We begin with the raw amino-acid sequence, 122 residues long: Large ribosomal subunit protein uL14 (122 aa).

It belongs to the universal ribosomal protein uL14 family. In terms of assembly, part of the 50S ribosomal subunit. Forms a cluster with proteins L3 and L19. In the 70S ribosome, L14 and L19 interact and together make contacts with the 16S rRNA in bridges B5 and B8.

Binds to 23S rRNA. Forms part of two intersubunit bridges in the 70S ribosome. This Shewanella halifaxensis (strain HAW-EB4) protein is Large ribosomal subunit protein uL14.